A 760-amino-acid chain; its full sequence is MAIKNHILGFPRIGLNRELKFALEKYWSKKNTLEELLLIGKNIRKENWKNQIDSGMDYVTVGDFAWYDHVLNISMMINNIPERHNPNNHILNIDTLFKVARGSKGVDNNICSASEMTKWFNTNYHYIVPEFTSNQKFYFAWKQILEETDEALSLGYKVKPVLLGPLTYLWLGKVKNSKINKLDLLKKILPIYIQVFKELSSRNINWIQIDEPILVLDIPKNWKKEFQSTYKFLDGKIKILLATYFGDITHNLDIINKLSIQGLHIDLVSSKYDLLKLSKSINNNFLLSLGIINGRNIWKTNLLEWFYKLKDFMKINNNFWISSSCSLLHVPLDITIEENLTDFVKSWFSFGIQKCLEISLLSQVLQNNLDIKELKNWIKPIHEYKSSNIVNNTSVQKRTLKISSEQFIRKNEFSVRSKIQKETLCLPVLPTTTIGSFPQTSEIRKLRLDYKNKKINQLDYEKQIKIHIKKNIIQQEQLGLDVLVHGEPERNDMVEYFSEYLEGFVFTTYGWVQSYGSRCVKPPIIVGDISRITPMTVMWSKYAQSLTKKPVKAMLTGPVTILCWSFPREDISKEDICNQIAISLRDEVLDLENSGINIIQIDEPALREGLPLRTHEWNNYLRWAVKSFKICSSGVKNSTQIHTHMCYCEFNDIMPAIVDLDADVITIETSRSDMELLEFFKTFKYPNAIGPGVYDIHSPNIPSVQSIEKLLKKALKYISIQQLWVNPDCGLKTRNWTETSLALQNMLQATLNIRKEYFKK.

5-methyltetrahydropteroyltri-L-glutamate-binding positions include 17–20 (RELK) and K118. L-homocysteine is bound by residues 434 to 436 (IGS) and E487. L-methionine contacts are provided by residues 434-436 (IGS) and E487. 5-methyltetrahydropteroyltri-L-glutamate-binding positions include 518-519 (RC) and W564. D602 contributes to the L-homocysteine binding site. D602 contacts L-methionine. E608 provides a ligand contact to 5-methyltetrahydropteroyltri-L-glutamate. Zn(2+) contacts are provided by H644, C646, and E668. H697 acts as the Proton donor in catalysis. C729 provides a ligand contact to Zn(2+).

This sequence belongs to the vitamin-B12 independent methionine synthase family. Requires Zn(2+) as cofactor.

The enzyme catalyses 5-methyltetrahydropteroyltri-L-glutamate + L-homocysteine = tetrahydropteroyltri-L-glutamate + L-methionine. Its pathway is amino-acid biosynthesis; L-methionine biosynthesis via de novo pathway; L-methionine from L-homocysteine (MetE route): step 1/1. Its function is as follows. Catalyzes the transfer of a methyl group from 5-methyltetrahydrofolate to homocysteine resulting in methionine formation. The sequence is that of 5-methyltetrahydropteroyltriglutamate--homocysteine methyltransferase from Buchnera aphidicola subsp. Cinara cedri (strain Cc).